Consider the following 486-residue polypeptide: Cobyric acid synthase (486 aa).

The GATase cobBQ-type domain maps to 248–435 (VLNVVVPVLP…LHGLFESPAA (188 aa)). Cys-329 functions as the Nucleophile in the catalytic mechanism. Residue His-427 is part of the active site.

It belongs to the CobB/CobQ family. CobQ subfamily.

The protein operates within cofactor biosynthesis; adenosylcobalamin biosynthesis. Its function is as follows. Catalyzes amidations at positions B, D, E, and G on adenosylcobyrinic A,C-diamide. NH(2) groups are provided by glutamine, and one molecule of ATP is hydrogenolyzed for each amidation. This Pseudomonas syringae pv. tomato (strain ATCC BAA-871 / DC3000) protein is Cobyric acid synthase.